Here is a 376-residue protein sequence, read N- to C-terminus: UDP-4-amino-4,6-dideoxy-N-acetyl-beta-L-altrosamine transaminase (376 aa).

Residues Y4, 24-27, A54, and S176 each bind substrate; that span reads EILT. K181 carries the post-translational modification N6-(pyridoxal phosphate)lysine. Substrate is bound by residues N226 and 311–314; that span reads QVHY.

This sequence belongs to the DegT/DnrJ/EryC1 family.

The catalysed reaction is UDP-4-amino-4,6-dideoxy-N-acetyl-beta-L-altrosamine + 2-oxoglutarate = UDP-2-acetamido-2,6-dideoxy-beta-L-arabino-hex-4-ulose + L-glutamate. Functionally, catalyzes the second step in the biosynthesis of pseudaminic acid, a sialic-acid-like sugar that is used to modify flagellin. Uses UDP-2-acetamido-2,6-dideoxy-beta-L-arabino-4-hexulose as substrate producing UDP-4-amino-4,6-dideoxy-beta-L-AltNAc. The polypeptide is UDP-4-amino-4,6-dideoxy-N-acetyl-beta-L-altrosamine transaminase (pseC) (Campylobacter jejuni subsp. jejuni serotype O:2 (strain ATCC 700819 / NCTC 11168)).